A 1508-amino-acid chain; its full sequence is Ras guanine nucleotide exchange factor Y (1508 aa).

Disordered stretches follow at residues 1-73, 128-182, 197-272, 396-517, 565-593, 606-727, 831-1021, and 1153-1172; these read MIII…NNNE, KVLS…PKSV, IDNN…YSTS, ILQC…EDED, LSEN…SIPT, LPNI…AEPS, NVII…SNKE, and TNED…TNKN. Composition is skewed to low complexity over residues 9-22 and 33-72; these read NINN…NNNS and NNNN…NNNN. 2 stretches are compositionally biased toward polar residues: residues 128–150 and 172–182; these read KVLS…TNTI and DRTSQDIPKSV. Low complexity predominate over residues 199–216; the sequence is NNTTNNNSNNNNNSSLST. The span at 223-232 shows a compositional bias: basic and acidic residues; it reads DSLETNPIKD. Over residues 233–250 the composition is skewed to acidic residues; sequence EESEESEESEESKEEEEE. The span at 255–272 shows a compositional bias: low complexity; it reads IKTTKTTSETIESSYSTS. Basic and acidic residues predominate over residues 399-409; sequence CKDDSSSKDQD. The span at 413–447 shows a compositional bias: low complexity; sequence NNSAGSSGNSSASNSNRNSIAFSSSNHFSSESSQS. The segment covering 465–475 has biased composition (pro residues); it reads PQSPSPSPSPP. Polar residues predominate over residues 492–510; the sequence is FNQQTNFSVSPTKSPSNEK. 8 stretches are compositionally biased toward low complexity: residues 574-593, 606-660, 668-687, 831-855, 862-891, 942-984, 993-1019, and 1160-1172; these read NQPS…SIPT, LPNI…LTES, NNNN…NNNN, NVII…NTVK, NKSS…SLTP, SLWS…SPPT, ITTG…NNSN, and SNSN…TNKN. A coiled-coil region spans residues 659 to 686; that stretch reads ESLKTRIEENNNNNNNKNINNNNNNNNN. In terms of domain architecture, N-terminal Ras-GEF spans 1074–1234; the sequence is NRIKVRSASL…IILKIIDRKA (161 aa). The 231-residue stretch at 1278–1508 folds into the Ras-GEF domain; the sequence is DDLEIARQLT…LYKQSKIIEP (231 aa).

Its function is as follows. Promotes the exchange of Ras-bound GDP by GTP. This chain is Ras guanine nucleotide exchange factor Y (gefY), found in Dictyostelium discoideum (Social amoeba).